The sequence spans 456 residues: UDP-N-acetylmuramoylalanine--D-glutamate ligase (456 aa).

113–119 (GTNGKTT) lines the ATP pocket.

The protein belongs to the MurCDEF family.

Its subcellular location is the cytoplasm. The catalysed reaction is UDP-N-acetyl-alpha-D-muramoyl-L-alanine + D-glutamate + ATP = UDP-N-acetyl-alpha-D-muramoyl-L-alanyl-D-glutamate + ADP + phosphate + H(+). The protein operates within cell wall biogenesis; peptidoglycan biosynthesis. Functionally, cell wall formation. Catalyzes the addition of glutamate to the nucleotide precursor UDP-N-acetylmuramoyl-L-alanine (UMA). The sequence is that of UDP-N-acetylmuramoylalanine--D-glutamate ligase from Rippkaea orientalis (strain PCC 8801 / RF-1) (Cyanothece sp. (strain PCC 8801)).